The sequence spans 96 residues: Prokineticin Bm8-a (96 aa).

An N-terminal signal peptide occupies residues 1 to 19; it reads MKCFAQIVVLLLVIAFSHG. 5 disulfide bridges follow: C26-C38, C32-C50, C37-C78, C60-C86, and C80-C95.

The protein belongs to the AVIT (prokineticin) family. Expressed by the skin glands.

Its subcellular location is the secreted. Potent agonist for both PKR1/PROKR1 and PKR2/PROKR2, and inducer of a potent and long-lasting hyperalgesia. Also potentiates capsaicin-induced TRPV1 current, when tested on DRG neurons. At subnanomolar concentrations, this protein both induces potent chemotaxis of macrophages and stimulates LPS-induced production of the pro-inflammatory cytokines IL-1 and IL-12. In vivo, potently stimulates the contraction of the guinea-pig gastrointestinal (GI) smooth muscle (nanomolar concentration). In Bombina maxima (Giant fire-bellied toad), this protein is Prokineticin Bm8-a.